A 580-amino-acid polypeptide reads, in one-letter code: Probable mediator of RNA polymerase II transcription subunit 26a (580 aa).

Residues 108–183 (DEVMRIRDIL…AEWKRLVDQW (76 aa)) enclose the TFIIS N-terminal domain. Basic and acidic residues-rich tracts occupy residues 244–255 (RHSVESKHERKS), 280–290 (QTRREEADVRP), and 299–309 (VEPKRQTKQSR). The tract at residues 244-337 (RHSVESKHER…RKLAGPQQDK (94 aa)) is disordered. Residues 347 to 368 (FEFAKRKLQESYHQHENAKRQR) adopt a coiled-coil conformation.

Belongs to the Mediator complex subunit 26 family. As to quaternary structure, component of the Mediator complex.

It is found in the nucleus. Functionally, component of the Mediator complex, a coactivator involved in the regulated transcription of nearly all RNA polymerase II-dependent genes. Mediator functions as a bridge to convey information from gene-specific regulatory proteins to the basal RNA polymerase II transcription machinery. The Mediator complex, having a compact conformation in its free form, is recruited to promoters by direct interactions with regulatory proteins and serves for the assembly of a functional preinitiation complex with RNA polymerase II and the general transcription factors. May play a role in transcription elongation. The protein is Probable mediator of RNA polymerase II transcription subunit 26a (MED26A) of Arabidopsis thaliana (Mouse-ear cress).